Here is a 226-residue protein sequence, read N- to C-terminus: MGEKIKNLPEELRPRERLLRHGPESLNPAELLAVLLGSGTPQENALELALRLLTTFGGLKGLIEVHPEQLKSFKGIGQAKAAKLLAALELARRYYELTGENKLNFLNPDDVYNYLRYKIGHKKQEQVVVLYLNTKNQLCGENIVAIGGVNHAGVSPGDIFREAVKIGAYAVIIAHNHPSGDPTPSKEDIDFTGRVKKASEILGIKLLDHIILGENKYISMKAERLF.

One can recognise an MPN domain in the interval 104 to 226; sequence NFLNPDDVYN…YISMKAERLF (123 aa). His175, His177, and Asp188 together coordinate Zn(2+). The short motif at 175–188 is the JAMM motif element; it reads HNHPSGDPTPSKED.

This sequence belongs to the UPF0758 family.

The polypeptide is UPF0758 protein CHY_0341 (Carboxydothermus hydrogenoformans (strain ATCC BAA-161 / DSM 6008 / Z-2901)).